Reading from the N-terminus, the 2285-residue chain is AT-rich interactive domain-containing protein 1A (2285 aa).

Low complexity predominate over residues 1–14; the sequence is MAAQVAPAAASSLG. 2 disordered regions span residues 1–820 and 978–1005; these read MAAQ…ALPN and ATKMNNKADGTPKTESKSKKSSSSTTTN. Alanine 2 bears the N-acetylalanine mark. Residues 23–35 are compositionally biased toward basic and acidic residues; it reads ELKKAEQQQREEA. Serine 58 and serine 79 each carry phosphoserine. Gly residues-rich tracts occupy residues 79 to 95 and 121 to 130; these read SNGGGGGGGAGSGGGPG and PGGGGGGSSD. Low complexity-rich tracts occupy residues 131–142, 212–221, and 228–265; these read GVGAPPHSAAAA, YNSYYPNRSA, and AYALSSPRGGTPGSGAAAAAGSKPPPSSSASASSSSSS. Serine 233 carries the post-translational modification Phosphoserine. The span at 273–286 shows a compositional bias: gly residues; sequence AMGGGGPSAAGGGT. Threonine 286 is subject to Phosphothreonine. Residues 295–299 carry the LXXLL motif; sequence LNQLL. Positions 295–306 are enriched in polar residues; sequence LNQLLTSPSSAR. Serine 301 bears the Phosphoserine mark. A compositionally biased stretch (gly residues) spans 310–327; the sequence is GYPGGDYSGGPQDGGAGK. The segment covering 338–353 has biased composition (low complexity); the sequence is GAAAAAAAAAAASGGA. A phosphoserine mark is found at serine 363 and serine 382. The span at 400–425 shows a compositional bias: low complexity; it reads PYSQQQGPPSGPQQGHGYPGQPYGSQ. Arginine 429 carries the post-translational modification Asymmetric dimethylarginine. Low complexity-rich tracts occupy residues 447–457, 465–546, and 553–595; these read YTQQIPPYGQQ, QGQT…QHPQ, and QPQA…YSQQ. Position 604 is a phosphoserine (serine 604). The segment covering 610–621 has biased composition (low complexity); the sequence is SQASSAPSMTSS. The segment covering 628–637 has biased composition (polar residues); that stretch reads MNLSLQSRPS. Positions 658 to 674 are enriched in low complexity; it reads SPGVSTSGISSSQGEQS. The segment covering 675–685 has biased composition (polar residues); it reads NPAQSPFSPHT. Phosphoserine is present on residues serine 696, serine 698, serine 702, serine 730, serine 764, and serine 772. 2 stretches are compositionally biased toward polar residues: residues 730-747 and 755-793; these read SGQSDSIMHPSMNQSSIA and RNPQMPQYSSPQPGSALSPRQPSGGQIHTGMGSYQQNSM. Residues 797–807 show a composition bias toward gly residues; sequence GPQGGQYGPQG. The segment covering 808–820 has biased composition (low complexity); sequence GYPRQPNYNALPN. The ARID domain maps to 1017 to 1108; the sequence is EPERKMWVDR…CLYAFECKIE (92 aa). Disordered regions lie at residues 1113–1483 and 1539–1603; these read PPPD…MMGG and ANHE…SPSK. Low complexity predominate over residues 1141-1154; sequence MQGPQTPQSTSSSM. Residues 1162–1177 are compositionally biased toward pro residues; sequence PPTPASTPHSQIPPLP. Serine 1184 bears the Phosphoserine mark. Polar residues predominate over residues 1194-1219; sequence GSDSTFQKRNSMTPNPGYQPSMNTSD. At serine 1235 the chain carries Phosphoserine. An Omega-N-methylarginine modification is found at arginine 1276. Composition is skewed to polar residues over residues 1299–1315 and 1339–1356; these read NMSTGAPQPNLMPSNPD and YGNQFSTQGTPSGSPFPS. The span at 1357 to 1367 shows a compositional bias: low complexity; the sequence is QQTTMYQQQQQ. The Nuclear localization signal signature appears at 1368-1387; sequence NYKRPMDGTYGPPAKRHEGE. Positions 1396–1425 are enriched in low complexity; it reads GQGQPQQQQLPPAQPQPASQQQAAQPSPQQ. The segment covering 1468–1477 has biased composition (polar residues); that stretch reads PGTNAQQNMP. Pro residues predominate over residues 1554-1577; it reads PYGPSAPVPPMTRPPPSNYQPPPS. Serine 1604 is subject to Phosphoserine. Lysine 1612 carries the N6-acetyllysine modification. Residues 1709–1713 carry the LXXLL motif; sequence LPGLL. Disordered regions lie at residues 1747–1774 and 1859–1907; these read PGRFSKVSSPAPMEGGEEEEELLGPKLE and FESK…EKRI. Serine 1751 and serine 1754 each carry phosphoserine. Residues 1761–1774 are compositionally biased toward acidic residues; it reads GGEEEEELLGPKLE. The segment covering 1886–1895 has biased composition (low complexity); the sequence is EGTPGTTDQE. Threonine 1888 carries the phosphothreonine modification. The residue at position 1905 (lysine 1905) is an N6-acetyllysine. A phosphoserine mark is found at serine 1929 and serine 1944. Short sequence motifs (LXXLL) lie at residues 1967–1971 and 2085–2089; these read LCTLL and LDGLL.

In terms of assembly, component of SWI/SNF chromatin remodeling complexes, in some of which it can be mutually exclusive with ARID1B/BAF250B. The canonical complex contains a catalytic subunit (either SMARCA4/BRG1/BAF190A or SMARCA2/BRM/BAF190B) and at least SMARCE1, ACTL6A/BAF53, SMARCC1/BAF155, SMARCC2/BAF170, and SMARCB1/SNF5/BAF47. Other subunits specific to each of the complexes may also be present permitting several possible combinations developmentally and tissue specific. Component of the BAF (SWI/SNF-A) complex, which includes at least actin (ACTB), ARID1A/BAF250A, ARID1B/BAF250B, SMARCA2/BRM, SMARCA4/BRG1/BAF190A, ACTL6A/BAF53, ACTL6B/BAF53B, SMARCE1/BAF57, SMARCC1/BAF155, SMARCC2/BAF170, SMARCB1/SNF5/INI1, and one or more SMARCD1/BAF60A, SMARCD2/BAF60B, or SMARCD3/BAF60C. In muscle cells, the BAF complex also contains DPF3. Component of neural progenitors-specific chromatin remodeling complex (npBAF complex) composed of at least, ARID1A/BAF250A or ARID1B/BAF250B, SMARCD1/BAF60A, SMARCD3/BAF60C, SMARCA2/BRM/BAF190B, SMARCA4/BRG1/BAF190A, SMARCB1/BAF47, SMARCC1/BAF155, SMARCE1/BAF57, SMARCC2/BAF170, PHF10/BAF45A, ACTL6A/BAF53A and actin. Component of neuron-specific chromatin remodeling complex (nBAF complex) composed of at least, ARID1A/BAF250A or ARID1B/BAF250B, SMARCD1/BAF60A, SMARCD3/BAF60C, SMARCA2/BRM/BAF190B, SMARCA4/BRG1/BAF190A, SMARCB1/BAF47, SMARCC1/BAF155, SMARCE1/BAF57, SMARCC2/BAF170, DPF1/BAF45B, DPF3/BAF45C, ACTL6B/BAF53B and actin. Component of a SWI/SNF-like EBAFa complex, at least composed of SMARCA4/BRG1/BAF190A, SMARCB1/BAF47/SNF5, ACTL6A/BAF53A, SMARCE1/BAF57, SMARCD1/BAF60A, SMARCC1/BAF155, SMARCC2/BAF170, BAF250A and MLLT1/ENL. Interacts through its C-terminus with SMARCA2/BRM/BAF190B and SMARCA4/BRG1/BAF190A. Interacts with SMARCC1/BAF155. Interacts with FOS, FOSB isoform 1 and 2, FOSL1 and FOSL2. As to expression, highly expressed in spleen, thymus, prostate, testis, ovary, small intestine, colon, and PBL, and at a much lower level in heart, brain, placenta, lung, liver, skeletal muscle, kidney, and pancreas.

It localises to the nucleus. Functionally, involved in transcriptional activation and repression of select genes by chromatin remodeling (alteration of DNA-nucleosome topology). Component of SWI/SNF chromatin remodeling complexes that carry out key enzymatic activities, changing chromatin structure by altering DNA-histone contacts within a nucleosome in an ATP-dependent manner. Binds DNA non-specifically. Belongs to the neural progenitors-specific chromatin remodeling complex (npBAF complex) and the neuron-specific chromatin remodeling complex (nBAF complex). During neural development a switch from a stem/progenitor to a postmitotic chromatin remodeling mechanism occurs as neurons exit the cell cycle and become committed to their adult state. The transition from proliferating neural stem/progenitor cells to postmitotic neurons requires a switch in subunit composition of the npBAF and nBAF complexes. As neural progenitors exit mitosis and differentiate into neurons, npBAF complexes which contain ACTL6A/BAF53A and PHF10/BAF45A, are exchanged for homologous alternative ACTL6B/BAF53B and DPF1/BAF45B or DPF3/BAF45C subunits in neuron-specific complexes (nBAF). The npBAF complex is essential for the self-renewal/proliferative capacity of the multipotent neural stem cells. The nBAF complex along with CREST plays a role regulating the activity of genes essential for dendrite growth. This is AT-rich interactive domain-containing protein 1A (ARID1A) from Homo sapiens (Human).